Reading from the N-terminus, the 455-residue chain is Probable glycine dehydrogenase (decarboxylating) subunit 1 (455 aa).

It belongs to the GcvP family. N-terminal subunit subfamily. In terms of assembly, the glycine cleavage system is composed of four proteins: P, T, L and H. In this organism, the P 'protein' is a heterodimer of two subunits.

The catalysed reaction is N(6)-[(R)-lipoyl]-L-lysyl-[glycine-cleavage complex H protein] + glycine + H(+) = N(6)-[(R)-S(8)-aminomethyldihydrolipoyl]-L-lysyl-[glycine-cleavage complex H protein] + CO2. Functionally, the glycine cleavage system catalyzes the degradation of glycine. The P protein binds the alpha-amino group of glycine through its pyridoxal phosphate cofactor; CO(2) is released and the remaining methylamine moiety is then transferred to the lipoamide cofactor of the H protein. The sequence is that of Probable glycine dehydrogenase (decarboxylating) subunit 1 from Saccharolobus islandicus (strain Y.N.15.51 / Yellowstone #2) (Sulfolobus islandicus).